Reading from the N-terminus, the 439-residue chain is Trigger factor (439 aa).

Positions 163–248 constitute a PPIase FKBP-type domain; the sequence is GDRVTIDYRG…LNKLEAPKLP (86 aa).

The protein belongs to the FKBP-type PPIase family. Tig subfamily.

It localises to the cytoplasm. It catalyses the reaction [protein]-peptidylproline (omega=180) = [protein]-peptidylproline (omega=0). Functionally, involved in protein export. Acts as a chaperone by maintaining the newly synthesized protein in an open conformation. Functions as a peptidyl-prolyl cis-trans isomerase. The sequence is that of Trigger factor from Nitrosomonas europaea (strain ATCC 19718 / CIP 103999 / KCTC 2705 / NBRC 14298).